Reading from the N-terminus, the 725-residue chain is ATP-dependent zinc metalloprotease FtsH (725 aa).

Residues Met1 to Trp11 lie on the Cytoplasmic side of the membrane. Residues Leu12–Phe32 form a helical membrane-spanning segment. Over Ser33–Asn160 the chain is Extracellular. A helical transmembrane segment spans residues Gly161–Leu181. Residues Gly182–Glu725 lie on the Cytoplasmic side of the membrane. Gly252–Thr259 contributes to the ATP binding site. His474 is a Zn(2+) binding site. Glu475 is an active-site residue. Residues His478 and Asp552 each contribute to the Zn(2+) site. The interval Gln680–Glu725 is disordered. Positions Ser684–Glu725 are enriched in basic and acidic residues.

It in the central section; belongs to the AAA ATPase family. The protein in the C-terminal section; belongs to the peptidase M41 family. In terms of assembly, homohexamer. Zn(2+) is required as a cofactor.

It localises to the cell membrane. In terms of biological role, acts as a processive, ATP-dependent zinc metallopeptidase for both cytoplasmic and membrane proteins. Plays a role in the quality control of integral membrane proteins. The sequence is that of ATP-dependent zinc metalloprotease FtsH from Mycoplasmopsis pulmonis (strain UAB CTIP) (Mycoplasma pulmonis).